The chain runs to 177 residues: Translation initiation factor IF-3 (177 aa).

This sequence belongs to the IF-3 family. Monomer.

The protein resides in the cytoplasm. Functionally, IF-3 binds to the 30S ribosomal subunit and shifts the equilibrium between 70S ribosomes and their 50S and 30S subunits in favor of the free subunits, thus enhancing the availability of 30S subunits on which protein synthesis initiation begins. The protein is Translation initiation factor IF-3 of Acaryochloris marina (strain MBIC 11017).